The following is a 428-amino-acid chain: F-box/LRR-repeat protein 3 (428 aa).

Basic and acidic residues predominate over residues 1 to 21; it reads MKRGGRDSDRNSSEEGTAEKS. The tract at residues 1 to 27 is disordered; the sequence is MKRGGRDSDRNSSEEGTAEKSKKLRTT. Residues 34-81 enclose the F-box domain; it reads CDWGNLLQDIILQVFKYLPLLDRAHASQVCRNWNQVFHMPDLWRCFEF. LRR repeat units lie at residues 119-146, 181-207, 208-233, 234-259, 316-341, 343-368, and 369-394; these read SSKE…GLIS, DTPV…KMSS, CPHV…ALNY, HLLS…RIDV, GRSV…VVCA, GLRP…GLGE, and CEVS…SIME.

In terms of assembly, part of the SCF (SKP1-CUL1-F-box) E3 ubiquitin-protein ligase complex SCF(FBXL3) composed of CUL1, SKP1, RBX1 and FBXL3. Interacts with CRY1 and CRY2 (phosphorylated). Interacts with HDAC3. Interacts with KDM8. Undergoes autophagy-mediated degradation in the liver in a time-dependent manner. In terms of tissue distribution, widely expressed.

It is found in the nucleus. Its subcellular location is the cytoplasm. The protein operates within protein modification; protein ubiquitination. Functionally, substrate-recognition component of the SCF(FBXL3) E3 ubiquitin ligase complex involved in circadian rhythm function. Plays a key role in the maintenance of both the speed and the robustness of the circadian clock oscillation. The SCF(FBXL3) complex mainly acts in the nucleus and mediates ubiquitination and subsequent degradation of CRY1 and CRY2. Activity of the SCF(FBXL3) complex is counteracted by the SCF(FBXL21) complex. The protein is F-box/LRR-repeat protein 3 (FBXL3) of Homo sapiens (Human).